The chain runs to 157 residues: Isotocin-neurophysin IT 1 (157 aa).

An N-terminal signal peptide occupies residues 1–20 (MFGTSVSALCLLFLLSVCTA). A disulfide bridge links Cys-21 with Cys-26. A Glycine amide modification is found at Gly-29. Disulfide bonds link Cys-42–Cys-86, Cys-45–Cys-59, Cys-53–Cys-76, Cys-60–Cys-66, Cys-93–Cys-106, Cys-100–Cys-118, and Cys-107–Cys-112.

This sequence belongs to the vasopressin/oxytocin family. In terms of processing, seven disulfide bonds are present in neurophysin.

It localises to the secreted. Its function is as follows. Isotocin causes contraction of smooth muscles. In Oncorhynchus keta (Chum salmon), this protein is Isotocin-neurophysin IT 1.